The following is a 413-amino-acid chain: Aspartate aminotransferase, cytoplasmic (413 aa).

Positions 39 and 141 each coordinate L-aspartate. At serine 149 the chain carries Phosphoserine. Asparagine 195 is an L-aspartate binding site. Lysine 259 bears the N6-(pyridoxal phosphate)lysine mark. Arginine 387 lines the L-aspartate pocket.

It belongs to the class-I pyridoxal-phosphate-dependent aminotransferase family. As to quaternary structure, homodimer. Pyridoxal 5'-phosphate is required as a cofactor.

The protein localises to the cytoplasm. It carries out the reaction L-aspartate + 2-oxoglutarate = oxaloacetate + L-glutamate. The catalysed reaction is L-cysteine + 2-oxoglutarate = 2-oxo-3-sulfanylpropanoate + L-glutamate. It catalyses the reaction (2S)-2-aminobutanoate + 2-oxoglutarate = 2-oxobutanoate + L-glutamate. The enzyme catalyses 3-sulfino-L-alanine + 2-oxoglutarate = 3-sulfinopyruvate + L-glutamate. Its function is as follows. Biosynthesis of L-glutamate from L-aspartate or L-cysteine. Important regulator of levels of glutamate, the major excitatory neurotransmitter of the vertebrate central nervous system. Acts as a scavenger of glutamate in brain neuroprotection. The aspartate aminotransferase activity is involved in hepatic glucose synthesis during development and in adipocyte glyceroneogenesis. Using L-cysteine as substrate, regulates levels of mercaptopyruvate, an important source of hydrogen sulfide. Mercaptopyruvate is converted into H(2)S via the action of 3-mercaptopyruvate sulfurtransferase (3MST). Hydrogen sulfide is an important synaptic modulator and neuroprotectant in the brain. In addition, catalyzes (2S)-2-aminobutanoate, a by-product in the cysteine biosynthesis pathway. The protein is Aspartate aminotransferase, cytoplasmic of Homo sapiens (Human).